The primary structure comprises 424 residues: 3-phosphoshikimate 1-carboxyvinyltransferase (424 aa).

3-phosphoshikimate contacts are provided by Lys21, Ser22, and Arg26. Lys21 serves as a coordination point for phosphoenolpyruvate. Phosphoenolpyruvate contacts are provided by Gly92 and Arg120. The 3-phosphoshikimate site is built by Ser163, Ser164, Gln165, Ser191, Asp306, and Lys333. Gln165 serves as a coordination point for phosphoenolpyruvate. Residue Asp306 is the Proton acceptor of the active site. The phosphoenolpyruvate site is built by Arg337, Arg379, and Lys405.

The protein belongs to the EPSP synthase family. As to quaternary structure, monomer.

The protein localises to the cytoplasm. It carries out the reaction 3-phosphoshikimate + phosphoenolpyruvate = 5-O-(1-carboxyvinyl)-3-phosphoshikimate + phosphate. It functions in the pathway metabolic intermediate biosynthesis; chorismate biosynthesis; chorismate from D-erythrose 4-phosphate and phosphoenolpyruvate: step 6/7. Catalyzes the transfer of the enolpyruvyl moiety of phosphoenolpyruvate (PEP) to the 5-hydroxyl of shikimate-3-phosphate (S3P) to produce enolpyruvyl shikimate-3-phosphate and inorganic phosphate. In Clostridium perfringens (strain 13 / Type A), this protein is 3-phosphoshikimate 1-carboxyvinyltransferase.